Reading from the N-terminus, the 218-residue chain is Cell division protein SepF (218 aa).

The interval 24–115 is disordered; the sequence is EDVTASTDNV…IANRREQYQQ (92 aa). Positions 28 to 43 are enriched in polar residues; sequence ASTDNVIPRSQQSVRA. Positions 47 to 63 are enriched in basic and acidic residues; sequence PKQEPRNNHVQQDHQAR.

Belongs to the SepF family. As to quaternary structure, homodimer. Interacts with FtsZ.

Its subcellular location is the cytoplasm. Cell division protein that is part of the divisome complex and is recruited early to the Z-ring. Probably stimulates Z-ring formation, perhaps through the cross-linking of FtsZ protofilaments. Its function overlaps with FtsA. The protein is Cell division protein SepF of Streptococcus pyogenes serotype M4 (strain MGAS10750).